The following is a 455-amino-acid chain: Regulatory protein LuxO (455 aa).

In terms of domain architecture, Response regulatory spans 1 to 112 (MVEDTASVAA…RLRVTVNNAI (112 aa)). Aspartate 47 bears the 4-aspartylphosphate mark. Positions 132–361 (FIGSSQTMQA…LQNVLRNVVV (230 aa)) constitute a Sigma-54 factor interaction domain. ATP is bound by residues 160 to 167 (GESGTGKE) and 223 to 232 (ADGGTLFLDE).

Its function is as follows. Involved in the regulation of different processes depending on the cell density. Acts together with sigma-54 to repress, perhaps indirectly, some genes. The sequence is that of Regulatory protein LuxO (luxO) from Vibrio cholerae serotype O1 (strain ATCC 39315 / El Tor Inaba N16961).